The sequence spans 384 residues: Probable tRNA sulfurtransferase (384 aa).

In terms of domain architecture, THUMP spans 57-160; sequence EEVVDRVRNV…KKTYIYSKRI (104 aa). Residues 177 to 178, 202 to 203, R259, G281, and Q290 contribute to the ATP site; these read ML and YF.

This sequence belongs to the ThiI family.

It localises to the cytoplasm. It catalyses the reaction [ThiI sulfur-carrier protein]-S-sulfanyl-L-cysteine + a uridine in tRNA + 2 reduced [2Fe-2S]-[ferredoxin] + ATP + H(+) = [ThiI sulfur-carrier protein]-L-cysteine + a 4-thiouridine in tRNA + 2 oxidized [2Fe-2S]-[ferredoxin] + AMP + diphosphate. It carries out the reaction [ThiS sulfur-carrier protein]-C-terminal Gly-Gly-AMP + S-sulfanyl-L-cysteinyl-[cysteine desulfurase] + AH2 = [ThiS sulfur-carrier protein]-C-terminal-Gly-aminoethanethioate + L-cysteinyl-[cysteine desulfurase] + A + AMP + 2 H(+). The protein operates within cofactor biosynthesis; thiamine diphosphate biosynthesis. Its function is as follows. Catalyzes the ATP-dependent transfer of a sulfur to tRNA to produce 4-thiouridine in position 8 of tRNAs, which functions as a near-UV photosensor. Also catalyzes the transfer of sulfur to the sulfur carrier protein ThiS, forming ThiS-thiocarboxylate. This is a step in the synthesis of thiazole, in the thiamine biosynthesis pathway. The sulfur is donated as persulfide by IscS. The polypeptide is Probable tRNA sulfurtransferase (Clostridium acetobutylicum (strain ATCC 824 / DSM 792 / JCM 1419 / IAM 19013 / LMG 5710 / NBRC 13948 / NRRL B-527 / VKM B-1787 / 2291 / W)).